A 1043-amino-acid polypeptide reads, in one-letter code: Non-canonical nonribosomal peptide synthetase cpsA (1043 aa).

An adenylation (A) domain region spans residues 41 to 386 (RRAQENPSAP…IGGDGVSPGY (346 aa)). In terms of domain architecture, Carrier spans 549-626 (QDASTTISRL…QMARYVDEGG (78 aa)). Ser-586 bears the O-(pantetheine 4'-phosphoryl)serine mark. Positions 671 to 914 (MTGATGFVGA…FVPVDYLVDA (244 aa)) are short-chain dehydrogenase/reductase (R) domain. The Thioester reductase (TE) domain maps to 672-915 (TGATGFVGAF…VPVDYLVDAI (244 aa)).

Belongs to the NRP synthetase family. Requires pantetheine 4'-phosphate as cofactor.

The catalysed reaction is L-valine + ATP + NADPH + H(+) = L-valinal + AMP + diphosphate + NADP(+). The enzyme catalyses L-tryptophan + ATP + NADPH + H(+) = L-tryptophanal + AMP + diphosphate + NADP(+). It participates in alkaloid biosynthesis. Functionally, non-canonical nonribosomal peptide synthetase; part of the gene cluster that mediates the biosynthesis of campesine G, a dimeric indole piperazine alkaloid that shows good insecticidal activity Galleria mellonella. CpsA catalyzes the first steps of the pathway by producing L-tryptophanal and L-valinal from their respective amino-acids. These products condensate spontaneously to form trypyl-valyl pyrazine also known as didehydrocampesine A. The NmrA-like family domain-containing oxidoreductase cpsB is the next enzyme in cps pathway and reduces the unstable didehydrocampesine A to campesine A. The methyltransferase cpsF and the acetyltransferase cpsE both recognize N13 of piperazine ring to carry out methylation and acetylation of campesine A to produce campesine C and B, respectively. The cytochrome P450 monooxygenase cpsD then acts as a dimerase that catalyzes oxidative heterocoupling between campesine B and C to produce heterodimers with unexpected 6/5/6/6/6/6/5/6 eight-ring scaffold called campesine D. Finally,the cytochrome P450 monooxygenase cpsC is a regioselective dehydrogenase that catalyzes dehydrogenation reaction towards C2-N1 to produce campesine G. The protein is Non-canonical nonribosomal peptide synthetase cpsA of Aspergillus campestris (strain IBT 28561).